The sequence spans 683 residues: Synaptic vesicle glycoprotein 2B (683 aa).

A compositionally biased stretch (basic and acidic residues) spans 1–10 (MDDYRYRDNY). Positions 1-72 (MDDYRYRDNY…QTKMAPSRAD (72 aa)) are disordered. Residues 1 to 110 (MDDYRYRDNY…ECGHGRFQWT (110 aa)) lie on the Cytoplasmic side of the membrane. Ser33 is modified (phosphoserine). At Thr36 the chain carries Phosphothreonine. A helical membrane pass occupies residues 111-131 (LFFVLVLALMADGVEVFVVSF). Topologically, residues 132 to 148 (ALPSAEKDMCLSSSKKG) are extracellular. The chain crosses the membrane as a helical span at residues 149–169 (MLGLIVYLGMMAGAFILGGLA). Residues 170-182 (DKLGRKKVLSMSL) are Cytoplasmic-facing. A helical transmembrane segment spans residues 183–203 (AINASFASLSSFVQGYGAFLF). Residues 204–205 (CR) lie on the Extracellular side of the membrane. Residues 206–226 (LISGIGIGGSLPIVFAYFSEF) form a helical membrane-spanning segment. Residues 227–237 (LSREKRGEHLS) are Cytoplasmic-facing. Residues 238 to 258 (WLGIFWMTGGIYASAMAWSII) traverse the membrane as a helical segment. Over 259–277 (PHYGWGFSMGTNYHFHSWR) the chain is Extracellular. A helical membrane pass occupies residues 278 to 298 (VFVIVCALPATVSMVALKFMP). The Cytoplasmic portion of the chain corresponds to 299–390 (ESPRFLLEMG…CVMGPYRMNT (92 aa)). Residues 391 to 411 (LILAVVWFTMALSYYGLTVWF) traverse the membrane as a helical segment. Topologically, residues 412–535 (PDMIRYFQDE…CHMDFEEDND (124 aa)) are extracellular. Tyr423 is subject to Phosphotyrosine. Residues Asn441, Asn491, and Asn516 are each glycosylated (N-linked (GlcNAc...) asparagine). Residues 536 to 556 (FLIYLVSFLGSLSVLPGNIIS) traverse the membrane as a helical segment. Residues 557–565 (ALLMDRIGR) are Cytoplasmic-facing. A helical transmembrane segment spans residues 566-586 (LKMIGGSMLISAVCCFFLFFG). Residues 587 to 592 (NSESAM) lie on the Extracellular side of the membrane. The helical transmembrane segment at 593-613 (IGWQCLFCGTSIAAWNALDVI) threads the bilayer. The Cytoplasmic segment spans residues 614–626 (TVELYPTNQRATA). The helical transmembrane segment at 627 to 649 (FGILNGLCKLGAILGNTIFASFV) threads the bilayer. Over 650–653 (GITK) the chain is Extracellular. The chain crosses the membrane as a helical span at residues 654 to 672 (VVPILLAAASLVGGGLVAL). The Cytoplasmic segment spans residues 673 to 683 (RLPETREQVLM).

Belongs to the major facilitator superfamily. In terms of assembly, interacts with SYT1 in a calcium-independent manner. Forms a complex with SYT1, syntaxin-1 and SNAP25. (Microbial infection) Interacts with C.botulinum neurotoxin type A1 and type A2 (BoNT/A, botA). Interaction is improved by glycosylation of SV2. As to quaternary structure, (Microbial infection) Interacts with C.botulinum neurotoxin type D (BoNT/D, botD). In terms of assembly, (Microbial infection) Interacts with C.botulinum neurotoxin type E (BoNT/E). Interaction requires glycosylation of SV2 proteins. (Microbial infection) Interacts with C.botulinum neurotoxin type F (BoNT/F). Interaction requires glycosylation of SV2 proteins. In terms of processing, N-glycosylated. Post-translationally, the N-terminal cytoplasmic domain is phosphorylated by CK1. In terms of tissue distribution, widely expressed throughout the brain. Specifically expressed by pinealocytes in the pineal gland. Also detected in testis (at protein level). Specifically expressed in neural tissues. Expressed in the spinal cord and in all brain regions with a stronger expression in hippocampus and cortex.

Its subcellular location is the cytoplasmic vesicle. The protein localises to the secretory vesicle. The protein resides in the synaptic vesicle membrane. It localises to the acrosome. In terms of biological role, probably plays a role in the control of regulated secretion in neural and endocrine cells. Its function is as follows. (Microbial infection) Receptor for C.botulinum neurotoxin type A (BoNT/A, botA); the toxin binds via extracellular loop 4. Restores uptake of BoNT/A in mouse and rat cells that are deleted for SV2 receptor. Glycosylation of SV2B is not essential for receptor activity, but enhances the interaction. Also serves as a receptor for the closely related C.botulinum neurotoxin type A2; glycosylation is not essential but enhances the interaction. (Microbial infection) Possible receptor for C.botulinum neurotoxin type D (BoNT/D, botD); BoNT/D does not bind to extracellular loop 4 as do BoNT/A and BoNT/E. Another group does not find a convincing interaction with SV2. Functionally, (Microbial infection) Receptor for C.botulinum neurotoxin type E (BoNT/E); the toxin probably binds via extracellular loop 4. Restores uptake of BoNT/E in mouse cells that are deleted for SV2 receptor. Glycosylation of SV2B is not essential for receptor activity, but enhances the interaction. In terms of biological role, (Microbial infection) Receptor for C.botulinum neurotoxin type F (BoNT/F); binding requires glycosylation of this protein. In Rattus norvegicus (Rat), this protein is Synaptic vesicle glycoprotein 2B (Sv2b).